A 435-amino-acid chain; its full sequence is Deoxybrevianamide E synthase (435 aa).

Residues 1–28 (MTAPELRAPAGHPQEPPARSSPAQALSS) are disordered. Glutamate 96 contacts brevianamide F. Residues arginine 110, lysine 195, tyrosine 197, lysine 265, tyrosine 267, tyrosine 354, tyrosine 419, and tyrosine 423 each coordinate dimethylallyl diphosphate.

The protein belongs to the tryptophan dimethylallyltransferase family. As to quaternary structure, monomer.

It carries out the reaction brevianamide F + dimethylallyl diphosphate = deoxybrevianamide E + diphosphate. Its pathway is alkaloid biosynthesis. Its function is as follows. Deoxybrevianamide E synthase; part of the gene cluster that mediates the biosynthesis of notoamide, a fungal indole alkaloid that belongs to a family of natural products containing a characteristic bicyclo[2.2.2]diazaoctane core. The first step of notoamide biosynthesis involves coupling of L-proline and L-tryptophan by the bimodular NRPS notE', to produce cyclo-L-tryptophan-L-proline called brevianamide F. The reverse prenyltransferase notF' then acts as a deoxybrevianamide E synthase and converts brevianamide F to deoxybrevianamide E via reverse prenylation at C-2 of the indole ring leading to the bicyclo[2.2.2]diazaoctane core. Deoxybrevianamide E is further hydroxylated at C-6 of the indole ring, likely catalyzed by the cytochrome P450 monooxygenase notG', to yield 6-hydroxy-deoxybrevianamide E. 6-hydroxy-deoxybrevianamide E is a specific substrate of the prenyltransferase notC' for normal prenylation at C-7 to produce 6-hydroxy-7-prenyl-deoxybrevianamide, also called notoamide S. As the proposed pivotal branching point in notoamide biosynthesis, notoamide S can be diverted to notoamide E through an oxidative pyran ring closure putatively catalyzed by either notH' cytochrome P450 monooxygenase or the notD' FAD-linked oxidoreductase. This step would be followed by an indole 2,3-epoxidation-initiated pinacol-like rearrangement catalyzed by the notB' FAD-dependent monooxygenase leading to the formation of notoamide C and notoamide D. On the other hand notoamide S is converted to notoamide T by notH' (or notD'), a bifunctional oxidase that also functions as the intramolecular Diels-Alderase responsible for generation of (-)-notoamide T. To generate antipodal (+)-notoaminide T, notH (or notD) in Aspergillus strain MF297-2 is expected to catalyze a Diels-Alder reaction leading to the opposite stereochemistry. The remaining oxidoreductase notD' (or notH') likely catalyzes the oxidative pyran ring formation to yield (-)-stephacidin A. The FAD-dependent monooxygenase notI' is highly similar to notB' and is predicted to catalyze a similar conversion from (-)-stephacidin A to (+)-notoamide B via the 2,3-epoxidation of (-)-stephacidin A followed by a pinacol-type rearrangement. Finally, it remains unclear which enzyme could be responsible for the final hydroxylation steps leading to notoamide A and sclerotiamide. The sequence is that of Deoxybrevianamide E synthase from Aspergillus versicolor.